Reading from the N-terminus, the 371-residue chain is Macrolide export protein MacA (371 aa).

Residues 1–10 (MKKRKTVKKR) are Cytoplasmic-facing. The helical transmembrane segment at 11–31 (YVIALVIVIAGLITLWRILNA) threads the bilayer. The Periplasmic segment spans residues 32–371 (PVPTYQTLIV…IGEAKPGAAQ (340 aa)). Residues 92 to 137 (IDPEQAENQIKEVEATLMELRAQRQQAEAELKLARVTYSRQQRLAQ) are a coiled coil.

Belongs to the membrane fusion protein (MFP) (TC 8.A.1) family. In terms of assembly, homohexamer. Part of the tripartite efflux system MacAB-TolC, which is composed of an inner membrane transporter, MacB, a periplasmic membrane fusion protein, MacA, and an outer membrane component, TolC. The complex forms a large protein conduit and can translocate molecules across both the inner and outer membranes. MacA interacts with MacB and TolC.

It is found in the cell inner membrane. In terms of biological role, part of the tripartite efflux system MacAB-TolC. MacA stimulates the ATPase activity of MacB by promoting the closed ATP-bound state of MacB, increases the capacity of MacB to bind macrolides such as erythromycin, and provides a physical link between MacB and TolC. Confers resistance against macrolides. This chain is Macrolide export protein MacA (macA), found in Escherichia coli O157:H7.